Here is a 957-residue protein sequence, read N- to C-terminus: MYGSARTISNLEGSPSRSPRLPRSPRLGHRRTSSGGGGGTGKTLSMENIQSLNAAYATSGPMYLSDHEGVASTTYPKGTMTLGRATNRAVYGGRVTAMGSSPNIASAGLSHTDVLSYTDQHGGLSGSSHHHHHQVPSMLRQVRDSTMLDLQAQLKELQRENDLLRKELDIKDSKLGSSMNSIKTFWSPELKKERVLRKEEAARMSVLKEQMRVSHEENQHLQLTIQALQDELRTQRDLNHLLQQESGNRGAEHFTIELTEENFRRLQAEHDRQAKELFLLRKTLEEMELRIETQKQTLNARDESIKKLLEMLQSKGLPSKSLEDDNERTRRMAEAESQVSHLEVILDQKEKENIHLREELHRRSQLQPEPAKTKALQTVIEMKDTKIASLERNIRDLEDEVQMLKANGVLNTEDREEEIKQIEVYKSHSKFMKTKIDQLKQELSKKESELLALQTKLETLSNQNSDCKQHIEVLKESLTAKEQRAAILQTEVDALRLRLEEKESFLNKKTKQLQDLTEEKGTLAGEIRDMKDMLEVKERKINVLQKKIENLQEQLRDKDKQLTNLKDRVKSLQTDSSNTDTALATLEEALSEKERIIERLKEQRERDDRERLEEIESFRKENKDLKEKVNALQAELTEKESSLIDLKEHASSLASAGLKRDSKLKSLEIAIEQKKEECNKLEAQLKKAHNIEDDSRMNPEFADRLKQLDKEASYYRDECGKAQAEVDRLLEILKEVENEKNDKDKKIAELESLTLRHMKDQNKKVANLKYNQQLEKKKNAQLLEEVRRREDSMVDNSQHLQIEELMNALEKTRQELDATKARLASTQQSLAEKEAHLANLRIERRKQLEEILEMKQEALLAAISEKDANIALLELSASKKKKTQEEVMALKREKDRLVHQLKQQTQNRMKLMADNYDEDHHHYHHHHHHHHHRSPGRSQHSNHRPSPDQDDEEGIWA.

A compositionally biased stretch (polar residues) spans Met-1–Gly-13. Residues Met-1–Leu-44 form a disordered region. Low complexity predominate over residues Ser-14–Pro-25. 2 positions are modified to phosphoserine: Ser-65 and Ser-666. Residues Arg-140 to Asp-917 are a coiled coil. Over residues His-922 to His-943 the composition is skewed to basic residues. Residues His-922 to Ala-957 are disordered. Residues Asp-948–Ala-957 are compositionally biased toward acidic residues.

As to quaternary structure, interacts with BSN, ERC1, PPFIA1, PPFIA2, PPFIA3 and PPFIA4. Interacts through its C-terminus with the PDZ domain of RIMS1. Part of a complex consisting of ERC2, RIMS1 and UNC13A. As to expression, expressed throughout the central nervous system, including hippocampus, cortex, cerebellum and olfactory bulb.

Its subcellular location is the cytoplasm. The protein resides in the synapse. The protein localises to the presynaptic active zone. It localises to the cytoskeleton. Thought to be involved in the organization of the cytomatrix at the nerve terminals active zone (CAZ) which regulates neurotransmitter release. Seems to act together with BSN. May recruit liprin-alpha proteins to the CAZ. This Mus musculus (Mouse) protein is ERC protein 2 (Erc2).